The chain runs to 644 residues: Probable potassium transport system protein Kup (644 aa).

12 helical membrane-spanning segments follow: residues 10 to 30 (GGATLPLMAMAALGVVFGDIG), 56 to 76 (ILSLIFWTLVLVVSVKYAWVI), 106 to 126 (WWILSIGLLGAALFYGDGVIT), 143 to 163 (PAWKPLVIPLALGVIIGLFMV), 175 to 195 (FGPSMLVWFLLLFGSGLTWIV), 212 to 232 (FFGIHGIGGLVILGAVVLAVT), 252 to 272 (AWYFLVLPALALNYLGQGALL), 282 to 302 (PFFMLFPAWATIPMVVISGIA), 343 to 363 (IYLPLLNWLLMVAVIVVILWF), 371 to 391 (FAYGTAVTGTMLMTTILVFFV), 403 to 423 (AGLFCGFFVLLDGVFFGANLL), and 425 to 445 (FVEGGWFPLAIGLAVFTTMST).

It belongs to the HAK/KUP transporter (TC 2.A.72) family.

The protein resides in the cell inner membrane. It catalyses the reaction K(+)(in) + H(+)(in) = K(+)(out) + H(+)(out). Transport of potassium into the cell. Likely operates as a K(+):H(+) symporter. The polypeptide is Probable potassium transport system protein Kup (Acidithiobacillus ferrooxidans (strain ATCC 23270 / DSM 14882 / CIP 104768 / NCIMB 8455) (Ferrobacillus ferrooxidans (strain ATCC 23270))).